A 344-amino-acid chain; its full sequence is N-acetyl-gamma-glutamyl-phosphate reductase (344 aa).

Cysteine 149 is a catalytic residue.

This sequence belongs to the NAGSA dehydrogenase family. Type 1 subfamily.

It is found in the cytoplasm. It carries out the reaction N-acetyl-L-glutamate 5-semialdehyde + phosphate + NADP(+) = N-acetyl-L-glutamyl 5-phosphate + NADPH + H(+). It functions in the pathway amino-acid biosynthesis; L-arginine biosynthesis; N(2)-acetyl-L-ornithine from L-glutamate: step 3/4. Its function is as follows. Catalyzes the NADPH-dependent reduction of N-acetyl-5-glutamyl phosphate to yield N-acetyl-L-glutamate 5-semialdehyde. The protein is N-acetyl-gamma-glutamyl-phosphate reductase of Acidithiobacillus ferrooxidans (strain ATCC 23270 / DSM 14882 / CIP 104768 / NCIMB 8455) (Ferrobacillus ferrooxidans (strain ATCC 23270)).